We begin with the raw amino-acid sequence, 385 residues long: S-adenosylmethionine synthase (385 aa).

His14 lines the ATP pocket. Asp16 contributes to the Mg(2+) binding site. Glu42 is a binding site for K(+). 2 residues coordinate L-methionine: Glu55 and Gln98. Residues 98-108 form a flexible loop region; the sequence is QSGDIAQAVDN. Residues 165 to 167, 232 to 233, Asp241, 247 to 248, Ala264, and Lys268 contribute to the ATP site; these read DAK, RF, and RK. Asp241 provides a ligand contact to L-methionine. Lys272 serves as a coordination point for L-methionine.

This sequence belongs to the AdoMet synthase family. Homotetramer; dimer of dimers. Requires Mg(2+) as cofactor. It depends on K(+) as a cofactor.

It is found in the cytoplasm. It carries out the reaction L-methionine + ATP + H2O = S-adenosyl-L-methionine + phosphate + diphosphate. The protein operates within amino-acid biosynthesis; S-adenosyl-L-methionine biosynthesis; S-adenosyl-L-methionine from L-methionine: step 1/1. Catalyzes the formation of S-adenosylmethionine (AdoMet) from methionine and ATP. The overall synthetic reaction is composed of two sequential steps, AdoMet formation and the subsequent tripolyphosphate hydrolysis which occurs prior to release of AdoMet from the enzyme. This chain is S-adenosylmethionine synthase, found in Leuconostoc mesenteroides subsp. mesenteroides (strain ATCC 8293 / DSM 20343 / BCRC 11652 / CCM 1803 / JCM 6124 / NCDO 523 / NBRC 100496 / NCIMB 8023 / NCTC 12954 / NRRL B-1118 / 37Y).